The sequence spans 312 residues: GTP cyclohydrolase MptA (312 aa).

The protein belongs to the GTP cyclohydrolase IV family. Homodimer. Fe(2+) serves as cofactor.

It catalyses the reaction GTP + H2O = 7,8-dihydroneopterin 2',3'-cyclic phosphate + formate + diphosphate + H(+). The protein operates within cofactor biosynthesis; 5,6,7,8-tetrahydromethanopterin biosynthesis. Its function is as follows. Converts GTP to 7,8-dihydro-D-neopterin 2',3'-cyclic phosphate, the first intermediate in the biosynthesis of coenzyme methanopterin. The protein is GTP cyclohydrolase MptA of Methanococcus vannielii (strain ATCC 35089 / DSM 1224 / JCM 13029 / OCM 148 / SB).